The sequence spans 279 residues: Calcium-binding protein 4 (279 aa).

Residues 1-12 (MAEEQGRGRHGP) show a composition bias toward basic and acidic residues. A disordered region spans residues 1-114 (MAEEQGRGRH…PGPQHDAAQR (114 aa)). Serine 42 carries the phosphoserine modification. Positions 55–65 (GPSSSGEQTPM) are enriched in polar residues. EF-hand domains lie at 133-168 (EELD…LGYM), 187-204 (GRVD…KLRE), 210-245 (LGLR…LLGE), and 247-279 (LVGP…LSRH). Ca(2+)-binding residues include aspartate 146, aspartate 148, aspartate 150, tyrosine 152, and aspartate 157. Ca(2+)-binding residues include aspartate 223, aspartate 225, aspartate 227, arginine 229, glutamate 234, aspartate 260, asparagine 262, aspartate 264, threonine 266, and glutamate 271.

As to quaternary structure, interacts with CACNA1F and CACNA1D (via IQ domain) in a calcium independent manner. Interacts (via N-terminus) with UNC119. Post-translationally, phosphorylated. Phosphorylation levels change with the light conditions and regulate the activity. Expressed in the retina.

It localises to the cytoplasm. The protein resides in the presynapse. Its function is as follows. May play a role in normal synaptic function, probably through regulation of Ca(2+) influx and neurotransmitter release in photoreceptor synaptic terminals and in auditory transmission. Modulator of CACNA1F, shifting the activation range to more hyperpolarized voltages. The polypeptide is Calcium-binding protein 4 (CABP4) (Bos taurus (Bovine)).